A 421-amino-acid chain; its full sequence is Immunoglobulin heavy constant epsilon (421 aa).

Ig-like domains follow at residues 5 to 97 (PQLY…VNIT), 99 to 184 (PTLE…KVTS), 201 to 301 (PRGV…RSIT), and 310 to 410 (PEVY…KTIS). The cysteines at positions 23 and 75 are disulfide-linked. N-linked (GlcNAc...) asparagine glycans are attached at residues N43, N72, N84, N95, N166, N238, N261, N365, and N415. Disulfide bonds link C121/C180, C226/C285, and C330/C392.

As to quaternary structure, the basic structural unit consists of two identical heavy chains and two identical light chains; disulfide-linked. N-terminal variable regions of the heavy and light chains form the antigen binding sites, whereas the C-terminal constant regions of the heavy chains interact with immune receptors to mediate effector functions.

It localises to the secreted. The protein localises to the cell membrane. Functionally, constant region of immunoglobulin heavy chains. Immunoglobulins, also known as antibodies, are membrane-bound or secreted glycoproteins produced by B lymphocytes. In the recognition phase of humoral immunity, the membrane-bound immunoglobulins serve as receptors which, upon binding of a specific antigen, trigger the clonal expansion and differentiation of B lymphocytes into immunoglobulins-secreting plasma cells. Secreted immunoglobulins mediate the effector phase of humoral immunity, which results in the elimination of bound antigens. The antigen binding site is formed by the variable domain of one heavy chain, together with that of its associated light chain. Thus, each immunoglobulin has two antigen binding sites with remarkable affinity for a particular antigen. The variable domains are assembled by a process called V-(D)-J rearrangement and can then be subjected to somatic hypermutations which, after exposure to antigen and selection, allow affinity maturation for a particular antigen. In Mus musculus (Mouse), this protein is Immunoglobulin heavy constant epsilon.